Consider the following 909-residue polypeptide: Short transient receptor potential channel 3 (909 aa).

The tract at residues 1-92 is disordered; that stretch reads MSTKVKKCRE…VRGPAFMFGA (92 aa). Residues 1–447 are Cytoplasmic-facing; that stretch reads MSTKVKKCRE…KILRSPFMKF (447 aa). Positions 19–28 are enriched in acidic residues; sequence PEEEDGEAEG. Positions 47 to 57 are enriched in pro residues; it reads PPCPRAPPSPG. Positions 58-67 are enriched in low complexity; it reads PDASSEGSPS. ANK repeat units follow at residues 99–128, 134–163, 165–191, and 220–249; these read AEEE…TLNV, MGQN…LARI, DALL…FAAS, and PDIT…RIER. Position 146 (glutamate 146) interacts with Ca(2+). Residues 448–465 traverse the membrane as a helical segment; the sequence is VAHAASFIIFLGLLVFNA. Over 466–496 the chain is Extracellular; sequence SDRFEGITTLPNITVIDYPKQIFRVKTTQFT. Asparagine 477 carries N-linked (GlcNAc...) asparagine glycosylation. Residues 497–515 form a helical membrane-spanning segment; the sequence is WTEMLIMVWVLGMMWSECK. Glutamate 513, glutamate 516, and asparagine 531 together coordinate Ca(2+). The Cytoplasmic segment spans residues 516-528; the sequence is ELWLEGPREYIVQ. A helical membrane pass occupies residues 529 to 550; it reads LWNVLDFGMLSIFIAAFTARFL. The Extracellular segment spans residues 551-594; the sequence is AFLQATKAQQYVDSHVQESDLSEVTLPPEVQYFTYARDKWLPSD. A helical membrane pass occupies residues 595-618; that stretch reads PQIISEGLYAIAVVLSFSRIAYIL. The Cytoplasmic portion of the chain corresponds to 619-637; sequence PANESFGPLQISLGRTVKD. Residues 622-651 form an ANK 5 repeat; that stretch reads ESFGPLQISLGRTVKDIFKFMVLFIMVFLA. A helical membrane pass occupies residues 638-661; it reads IFKFMVLFIMVFLAFMIGMFILYS. At 662 to 701 the chain is on the extracellular side; that stretch reads YYLGAKVNPAFTTVEESFKTLFWSIFGLSEVTSVVLKYDH. The chain crosses the membrane as a helical span at residues 702 to 727; it reads KFIENIGYVLYGIYNVTMVVVLLNML. Over 728–909 the chain is Cytoplasmic; it reads IAMINSSYQE…KLNPSALRCE (182 aa). 4 residues coordinate Ca(2+): glutamate 859, glutamate 862, glutamate 864, and aspartate 871.

It belongs to the transient receptor (TC 1.A.4) family. STrpC subfamily. TRPC3 sub-subfamily. As to quaternary structure, homotetramer. Interacts with ITPR1, ITPR3, MX1 and RNF24. Interacts with JPH2; the interaction is involved in maintaining Ca(2+) homeostasis in skeletal muscle and is mediated by JPH2 'Ser-165' phosphorylation.

Its subcellular location is the cell membrane. The catalysed reaction is Ca(2+)(in) = Ca(2+)(out). With respect to regulation, activated by diacylglycerol (DAG) in a membrane-delimited fashion, independently of protein kinase C. Activated by inositol 1,4,5-triphosphate receptors (ITPR) with bound IP3. May be activated by internal calcium store depletion. Inhibited by intracellular Ca(2+). Functionally, forms a receptor-activated non-selective calcium permeant cation channel. May be operated by a phosphatidylinositol second messenger system activated by receptor tyrosine kinases or G-protein coupled receptors. The protein is Short transient receptor potential channel 3 (Trpc3) of Rattus norvegicus (Rat).